A 315-amino-acid polypeptide reads, in one-letter code: MVVVTEEIVNGLKETLTDVSQPIAKRFRSLFTLRNLNGPLCIDAMASALNDKSALLRHEIAYCLGQMEDEYALKVLIDLVKNSDEHPMVRHEAAEALGAIGSESAHKTLKEYSNDPVREVSETCQLALSRVEWYEKNKPETEEDKMYMSVDPAPPLKKGSVSRDELRSKFLDSNLDIFNRYRALFSLRDIGDEQSVLALCDGLKDQSSALLRHEVAFVLGQLQHRVAIDPLTTCVLDESENAMVRHEAAEALGAIASTETIPLLEKLLQDKEPIVSESCAVALDVTEYFNNTESFQYADGIKILLEKNLVDQQQK.

6 HEAT-like PBS-type repeats span residues 23–52, 56–82, 89–115, 179–205, 211–237, and 244–270; these read IAKRFRSLFTLRNLNGPLCIDAMASALNDK, LRHEIAYCLGQMEDEYALKVLIDLVKN, VRHEAAEALGAIGSESAHKTLKEYSND, NRYRALFSLRDIGDEQSVLALCDGLKD, LRHEVAFVLGQLQHRVAIDPLTTCVLD, and VRHEAAEALGAIASTETIPLLEKLLQD. The Fe cation site is built by His-58, His-91, and Glu-92. Residues His-213, His-246, and Glu-247 each coordinate Fe cation.

It belongs to the deoxyhypusine hydroxylase family. Fe(2+) is required as a cofactor.

It carries out the reaction [eIF5A protein]-deoxyhypusine + AH2 + O2 = [eIF5A protein]-hypusine + A + H2O. The protein operates within protein modification; eIF5A hypusination. In terms of biological role, catalyzes the hydroxylation of the N(6)-(4-aminobutyl)-L-lysine intermediate produced by deoxyhypusine synthase/DHPS on a critical lysine of the eukaryotic translation initiation factor 5A/eIF-5A. This is the second step of the post-translational modification of that lysine into an unusual amino acid residue named hypusine. Hypusination is unique to mature eIF-5A factor and is essential for its function. The chain is Deoxyhypusine hydroxylase (dohh-1) from Dictyostelium discoideum (Social amoeba).